We begin with the raw amino-acid sequence, 217 residues long: Phosphatase MT3486 (217 aa).

The Nucleophile role is filled by aspartate 9.

This sequence belongs to the HAD-like hydrolase superfamily.

Able to hydrolyze geranyl diphosphate (GPP), farnesyl diphosphate (FPP) and geranylgeranyl diphosphate (GGPP) to respectively yield geraniol, farnesol and geranylgeraniol. This is Phosphatase MT3486 from Mycobacterium tuberculosis (strain CDC 1551 / Oshkosh).